Here is a 126-residue protein sequence, read N- to C-terminus: Chemocyanin (126 aa).

Positions Met-1 to Ser-30 are cleaved as a signal peptide. In terms of domain architecture, Phytocyanin spans Val-31–Ala-126. 3 residues coordinate Cu cation: His-69, Cys-109, and His-114. Residues Cys-82 and Cys-115 are joined by a disulfide bond.

As to expression, strongly expressed in stigma and style and to a lesser extent in leaves, ovary and petals. Not detected in pollen tubes, mature anthers or roots.

Functionally, diffusible chemotropic factor that induces pollen tube chemotropism. The sequence is that of Chemocyanin from Lilium longiflorum (Trumpet lily).